The primary structure comprises 582 residues: MTVEEVGDDYTKDGTVDLQGNPVRRSIRGRWKACSFVVVYEVFERMAYYGISSNLFIYMTTKLHQGTVKSSNNVTNWVGTSWLTPILGAYVGDALLGRYITFVISCAIYFSGMMVLTLSVTIPGIKPPECSTTNVENCEKASVLQLAVFFGALYTLAIGTGGTKPNISTIGADQFDVFDPKEKTQKLSFFNWWMFSIFFGTLFANTVLVYVQDNVGWTLGYGLPTLGLAISITIFLLGTPFYRHKLPTGSPFTKMARVIVASFRKANAPMTHDITSFHELPSLEYERKGAFPIHPTPSLRFLDRASLKTGTNHKWNLCTTTEVEETKQMLRMLPVLFITFVPSMMLAQINTLFVKQGTTLDRKVTGSFSIPPASLSGFVTLSMLISIVLYDRVFVKITRKFTGNPRGITLLQRMGIGLIFHILIMIVASVTERYRLKVAADHGLIHQTGVKLPLTIFALLPQFVLMGMADSFLEVAKLEFFYDQAPESMKSLGTSYSTTSLAIGNFMSSFLLSTVSEITKKRGRGWILNNLNESRLDYYYLFFAVLNLVNFVLFLVVVKFYVYRAEVTDSVDVKEVEMKETE.

11 helical membrane-spanning segments follow: residues 77–97, 100–120, 141–161, 189–209, 217–237, 334–354, 370–390, 408–428, 452–472, 493–515, and 538–558; these read WVGT…ALLG, ITFV…TLSV, ASVL…IGTG, FFNW…TVLV, WTLG…IFLL, PVLF…TLFV, IPPA…IVLY, ITLL…MIVA, LPLT…ADSF, GTSY…LSTV, and YYYL…LVVV.

Belongs to the major facilitator superfamily. Proton-dependent oligopeptide transporter (POT/PTR) (TC 2.A.17) family. In terms of tissue distribution, expressed in roots. Detected in shoots, leaves and flowers.

The protein resides in the membrane. Peptide transporter involved in stress tolerance in seeds during germination and in defense against virulent bacterial pathogens. This Arabidopsis thaliana (Mouse-ear cress) protein is Protein NRT1/ PTR FAMILY 5.2 (NPF5.2).